The chain runs to 47 residues: Large ribosomal subunit protein bL34 (47 aa).

The tract at residues 1 to 47 (MVTEGLKPHISIKKKKRKSGFLARMRTKSGRKIIARRRRKGRKRLAP) is disordered. Positions 10–47 (ISIKKKKRKSGFLARMRTKSGRKIIARRRRKGRKRLAP) are enriched in basic residues.

This sequence belongs to the bacterial ribosomal protein bL34 family.

In Aquifex aeolicus (strain VF5), this protein is Large ribosomal subunit protein bL34 (rpmH).